The following is a 185-amino-acid chain: Adenine phosphoribosyltransferase (185 aa).

This sequence belongs to the purine/pyrimidine phosphoribosyltransferase family. In terms of assembly, homodimer.

Its subcellular location is the cytoplasm. The catalysed reaction is AMP + diphosphate = 5-phospho-alpha-D-ribose 1-diphosphate + adenine. The protein operates within purine metabolism; AMP biosynthesis via salvage pathway; AMP from adenine: step 1/1. Its function is as follows. Catalyzes a salvage reaction resulting in the formation of AMP, that is energically less costly than de novo synthesis. This Pectobacterium atrosepticum (strain SCRI 1043 / ATCC BAA-672) (Erwinia carotovora subsp. atroseptica) protein is Adenine phosphoribosyltransferase.